A 24-amino-acid chain; its full sequence is Brevinin-1JDb (24 aa).

Cys-18 and Cys-24 are joined by a disulfide.

Expressed by the skin glands.

The protein localises to the secreted. Functionally, has antibacterial activity against E.coli and S.aureus strains. Has antifungal activity against C.albicans. Has hemolytic activity against rabbit erythrocytes. This chain is Brevinin-1JDb, found in Odorrana jingdongensis (Jingdong frog).